An 841-amino-acid polypeptide reads, in one-letter code: MLRTGVKRRLGPFAGYDEDDAATGGVSRRSKYSQQQSQHYYYGHNQSSYRDSGASHPNWKRNAHLMPPPLSSPSSPPPQYDKNIAALTHLNKKLDCLGPDDLECLKAMIRIREARAQGRRPEPSSAPSILESSLVSSNNSNNNTTLSLGGGGGGDYHRQTSPDIRDYTTGSLGLCMFPMDLPDPIKLLENRYTDNDRHAPAVVTHDELINTNYLLLFRKHFDALPPEELRVLVQDRTFAINNAPSLDVVAAMADENLTYVKFHRVHNLPVNPKDLYMSTLGLIKYATFNKLNLGELSCLLDSPGGGGSDREYHILRQIANKPASPCRKGGSSAAAAASFDVLRRPPLSFKHPLQQALALIASFARIVGVIRRRSLRHSGPFFIRDFDDTGATDSYRCGMISELIFDYLPGHRCQNEICRVKLKKLLQPYTSTLFFCAYNNTRKHPNGLPARRSPERRAPDATPNIPRLAYRRSATTSPEVEPAPPSRMTSSSPRVDSRGGGGDRRGDSSSTSSNHHRHHTRRARTRSTHDSSSSGSRRRSSATDGRRSRRGSRRGEAQRESNGHHSSKSPSTVSSTTVHGQNGARGDSAPSRKSQQSQQQPETTSKESSKTAAMPPPPSPCSPSPASRERRPSKSPSSSPRPHDPPSGEPADAEKELATAGDEDEGVRSPGECSVATRRGSSADESSDSSSSSSDSSSSSDEEESDVEDCRELDLQSKRLEEALEERCERDFEADDEEFAEPIEEDDLHCSLDMEEDIEDEPLDPETESVWTASVTPLAAPPSIRILDHEPGDAEEEEESDTDFYDETDQPLNKRIHLRSATPTDDVIMECDLSYSEMDSD.

Disordered stretches follow at residues 12–82 and 115–163; these read PFAG…QYDK and RAQG…TSPD. Residues 32–49 are compositionally biased toward low complexity; that stretch reads YSQQQSQHYYYGHNQSSY. Residues 66 to 79 show a composition bias toward pro residues; the sequence is MPPPLSSPSSPPPQ. The segment covering 132–147 has biased composition (low complexity); the sequence is SSLVSSNNSNNNTTLS. Residues cysteine 298, histidine 411, cysteine 413, and cysteine 418 each coordinate Zn(2+). A CHC2-type zinc finger spans residues 298–418; it reads CLLDSPGGGG…PGHRCQNEIC (121 aa). 2 disordered regions span residues 444–749 and 774–811; these read HPNG…DDLH and SVTP…TDQP. The span at 495-507 shows a compositional bias: basic and acidic residues; that stretch reads VDSRGGGGDRRGD. Residues 514-526 show a composition bias toward basic residues; the sequence is NHHRHHTRRARTR. Residues 553–563 are compositionally biased toward basic and acidic residues; it reads RRGEAQRESNG. 2 stretches are compositionally biased toward low complexity: residues 568 to 579 and 591 to 603; these read KSPSTVSSTTVH and SRKS…QPET. The span at 614–623 shows a compositional bias: pro residues; the sequence is MPPPPSPCSP. Residues 641–657 show a composition bias toward basic and acidic residues; the sequence is RPHDPPSGEPADAEKEL. Positions 688-699 are enriched in low complexity; it reads DSSSSSSDSSSS. The segment covering 708-731 has biased composition (basic and acidic residues); that stretch reads EDCRELDLQSKRLEEALEERCERD. 2 stretches are compositionally biased toward acidic residues: residues 732–749 and 793–809; these read FEAD…DDLH and DAEE…DETD.

Belongs to the HHV-1 ICP27 protein family.

The protein localises to the virion tegument. Its subcellular location is the virion. It is found in the host nucleus. It localises to the host cytoplasm. In terms of biological role, immediate early (EI) protein that plays many roles during productive infection including regulation of viral gene expression and nuclear export of intronless viral RNAs. This is mRNA export factor ICP27 homolog from Mus musculus (Mouse).